Here is a 266-residue protein sequence, read N- to C-terminus: Phosphate import ATP-binding protein PstB 1 (266 aa).

The ABC transporter domain maps to 18–261 (AQTSNLSFYY…PTNQLTEQYV (244 aa)). 50-57 (GPSGCGKT) serves as a coordination point for ATP.

The protein belongs to the ABC transporter superfamily. Phosphate importer (TC 3.A.1.7) family. In terms of assembly, the complex is composed of two ATP-binding proteins (PstB), two transmembrane proteins (PstC and PstA) and a solute-binding protein (PstS).

Its subcellular location is the cell inner membrane. It carries out the reaction phosphate(out) + ATP + H2O = ADP + 2 phosphate(in) + H(+). Part of the ABC transporter complex PstSACB involved in phosphate import. Responsible for energy coupling to the transport system. The chain is Phosphate import ATP-binding protein PstB 1 from Gloeobacter violaceus (strain ATCC 29082 / PCC 7421).